The primary structure comprises 265 residues: Energy-coupling factor transporter ATP-binding protein EcfA1 (265 aa).

Positions 2–236 constitute an ABC transporter domain; that stretch reads IKIKNLVFRY…KEIVELAKID (235 aa). An ATP-binding site is contributed by 36–43; the sequence is GHNGSGKS.

This sequence belongs to the ABC transporter superfamily. Energy-coupling factor EcfA family. Forms a stable energy-coupling factor (ECF) transporter complex composed of 2 membrane-embedded substrate-binding proteins (S component), 2 ATP-binding proteins (A component) and 2 transmembrane proteins (T component).

The protein resides in the cell membrane. Its function is as follows. ATP-binding (A) component of a common energy-coupling factor (ECF) ABC-transporter complex. Unlike classic ABC transporters this ECF transporter provides the energy necessary to transport a number of different substrates. This Mycoplasmopsis pulmonis (strain UAB CTIP) (Mycoplasma pulmonis) protein is Energy-coupling factor transporter ATP-binding protein EcfA1.